The following is a 152-amino-acid chain: Protein SprT-like (152 aa).

A SprT-like domain is found at 13–148 (NYVKKVSIED…FACGYCHGRL (136 aa)). A Zn(2+)-binding site is contributed by His-72. Residue Glu-73 is part of the active site. Zn(2+) is bound at residue His-76.

The protein belongs to the SprT family. The cofactor is Zn(2+).

Its subcellular location is the cytoplasm. The polypeptide is Protein SprT-like (Streptococcus agalactiae serotype III (strain NEM316)).